Consider the following 260-residue polypeptide: 3'-5' ssDNA/RNA exonuclease TatD (260 aa).

A divalent metal cation-binding residues include Glu92, His128, and His153.

It belongs to the metallo-dependent hydrolases superfamily. TatD-type hydrolase family. TatD subfamily. In terms of assembly, monomer. It depends on Mg(2+) as a cofactor.

Its subcellular location is the cytoplasm. Its function is as follows. 3'-5' exonuclease that prefers single-stranded DNA and RNA. May play a role in the H(2)O(2)-induced DNA damage repair. The chain is 3'-5' ssDNA/RNA exonuclease TatD from Yersinia pseudotuberculosis serotype O:3 (strain YPIII).